Reading from the N-terminus, the 807-residue chain is FAD-linked oxidoreductase pytB (807 aa).

A signal peptide spans 1-18 (MRFLGIAAVATFSTVVSA). N-linked (GlcNAc...) asparagine glycans are attached at residues N45, N106, N120, N242, N295, N351, N419, and N699. Residues 60-231 (FDELPVLLAY…VEFTLSLTSI (172 aa)) enclose the FAD-binding PCMH-type domain.

It belongs to the oxygen-dependent FAD-linked oxidoreductase family. Requires FAD as cofactor.

Its pathway is secondary metabolite biosynthesis. In terms of biological role, FAD-linked oxidoreductase; part of the gene cluster that mediates the biosynthesis of pyranterreones, a family of antioxidative compounds. The first step of pyranonigrins biosynthesis is performed by the hybrid PKS-NRPS synthetase pytA that condenses 4 malonyl-CoA units ato the acetyl starter unit by the modular PKS of pytA. The acyl chain is then connected to an L-serine through the amide bond by the modular NRPS of pytA. A tetramic acid is formed and released from the PKS-NRPS pytA to give pyranterreone 5 with the help of the thioesterase pytI. Pyranterreone 5 could be methylated by pytC to afford pyranterreone 6. Both pyranterreones 5 and 6 are subsequently oxidized by the FAD-linked oxidoreductase pytB and the cytochrome P450 monooxygenase pytD to form the fused gamma-pyrone core, resulting in pyranterreones 7 and 11, respectively. The hydroxy group at C-8 of pyranterreones 7 and 11 are dehydrated by the aspartyl protease pytH to form a delta-7 double bond to give pyranterreones 3 and 1, 2 accordingly. The exo-methylene of pyranterreone 3 could be reduced into a pendant methyl by reductase pytE to provide pyranterreone 4, also known as cordylactam. Pyranterreone 4 can be reconverted to pyranterreone 3 through pytB-catalyzed dehydrogenation or further oxidized to pyranterreones 9 and 10. This is FAD-linked oxidoreductase pytB from Aspergillus terreus (strain NIH 2624 / FGSC A1156).